A 424-amino-acid chain; its full sequence is CinA-like protein (424 aa).

This sequence belongs to the CinA family.

In Shewanella halifaxensis (strain HAW-EB4), this protein is CinA-like protein.